A 317-amino-acid polypeptide reads, in one-letter code: Acetyl-coenzyme A carboxylase carboxyl transferase subunit alpha (317 aa).

One can recognise a CoA carboxyltransferase C-terminal domain in the interval Leu-40 to Glu-293.

This sequence belongs to the AccA family. As to quaternary structure, acetyl-CoA carboxylase is a heterohexamer composed of biotin carboxyl carrier protein (AccB), biotin carboxylase (AccC) and two subunits each of ACCase subunit alpha (AccA) and ACCase subunit beta (AccD).

It is found in the cytoplasm. It carries out the reaction N(6)-carboxybiotinyl-L-lysyl-[protein] + acetyl-CoA = N(6)-biotinyl-L-lysyl-[protein] + malonyl-CoA. Its pathway is lipid metabolism; malonyl-CoA biosynthesis; malonyl-CoA from acetyl-CoA: step 1/1. Its function is as follows. Component of the acetyl coenzyme A carboxylase (ACC) complex. First, biotin carboxylase catalyzes the carboxylation of biotin on its carrier protein (BCCP) and then the CO(2) group is transferred by the carboxyltransferase to acetyl-CoA to form malonyl-CoA. In Rhizobium johnstonii (strain DSM 114642 / LMG 32736 / 3841) (Rhizobium leguminosarum bv. viciae), this protein is Acetyl-coenzyme A carboxylase carboxyl transferase subunit alpha.